Reading from the N-terminus, the 49-residue chain is MRVNITLEHKESGERLYLTSKNKRNTPDRLQLKKYSPKLRKHVVFTEVK.

This sequence belongs to the bacterial ribosomal protein bL33 family.

This Streptococcus gordonii (strain Challis / ATCC 35105 / BCRC 15272 / CH1 / DL1 / V288) protein is Large ribosomal subunit protein bL33.